A 130-amino-acid chain; its full sequence is Small ribosomal subunit protein uS9 (130 aa).

The protein belongs to the universal ribosomal protein uS9 family.

In Thiobacillus denitrificans (strain ATCC 25259 / T1), this protein is Small ribosomal subunit protein uS9.